We begin with the raw amino-acid sequence, 693 residues long: Elongation factor G (693 aa).

A tr-type G domain is found at 8-282; the sequence is EKTRNIGIMA…AVIDYLPSPL (275 aa). GTP-binding positions include 17–24, 81–85, and 135–138; these read AHVDAGKT, DTPGH, and NKMD.

This sequence belongs to the TRAFAC class translation factor GTPase superfamily. Classic translation factor GTPase family. EF-G/EF-2 subfamily.

The protein localises to the cytoplasm. In terms of biological role, catalyzes the GTP-dependent ribosomal translocation step during translation elongation. During this step, the ribosome changes from the pre-translocational (PRE) to the post-translocational (POST) state as the newly formed A-site-bound peptidyl-tRNA and P-site-bound deacylated tRNA move to the P and E sites, respectively. Catalyzes the coordinated movement of the two tRNA molecules, the mRNA and conformational changes in the ribosome. The polypeptide is Elongation factor G (Streptococcus pneumoniae serotype 2 (strain D39 / NCTC 7466)).